A 1263-amino-acid polypeptide reads, in one-letter code: Histone-lysine N-methyltransferase EHMT2 (1263 aa).

2 disordered regions span residues 1-314 (MRGL…LEEW) and 332-439 (DERV…EYME). Residues 26-39 (GRGRGGAHRGRGRP) are compositionally biased toward basic residues. An Asymmetric dimethylarginine modification is found at Arg-40. Residues 83-95 (LEKEPRGAAERVH) show a composition bias toward basic and acidic residues. At Ser-97 the chain carries Phosphoserine. The residue at position 101 (Thr-101) is a Phosphothreonine. A phosphoserine mark is found at Ser-104 and Ser-193. N6,N6,N6-trimethyllysine; by EHMT2; alternate is present on Lys-239. Lys-239 carries the N6,N6-dimethyllysine; by EHMT2; alternate modification. Residues 252-270 (PEKRPPEVQHFRMSDDMHL) are compositionally biased toward basic and acidic residues. Residues Lys-272 and Lys-282 each participate in a glycyl lysine isopeptide (Lys-Gly) (interchain with G-Cter in SUMO2) cross-link. Phosphoserine is present on residues Ser-285, Ser-294, and Ser-298. Basic and acidic residues-rich tracts occupy residues 302–312 (ILEKGEPRPLE) and 332–343 (DERVDSDSKSEV). Residues 350 to 380 (LSEEEEEEEEEEEEEEEEEEEEEEEEEDEES) are compositionally biased toward acidic residues. The segment covering 391 to 400 (GRRKAKKKWR) has biased composition (basic residues). Phosphoserine occurs at positions 403, 465, and 466. Thr-608 is subject to Phosphothreonine. Residues 621–647 (LAHDAPGRADTSQPSARMRGHGEPRRP) are disordered. Lys-687 is covalently cross-linked (Glycyl lysine isopeptide (Lys-Gly) (interchain with G-Cter in SUMO2)). ANK repeat units follow at residues 702–731 (FHPR…DPNF), 737–766 (SKRT…NINA), 770–799 (QQRT…CVYS), 803–833 (DGST…DVNA), 837–866 (GGWT…DVTL), 870–899 (EENI…DLHA), and 903–932 (HGDT…NPEL). The tract at residues 870–872 (EEN) is histone H3K9me binding. In terms of domain architecture, Pre-SET spans 1025–1088 (QHCTCVDDCS…SCKNRVVQSG (64 aa)). Positions 1027, 1029, 1033, 1038, 1040, 1070, 1074, 1076, and 1080 each coordinate Zn(2+). The region spanning 1091-1208 (VRLQLYRTAK…TGEELGFDYG (118 aa)) is the SET domain. S-adenosyl-L-methionine contacts are provided by residues 1101-1103 (MGW), Tyr-1138, and 1165-1166 (NH). The segment at 1127-1146 (DAEADVREDDSYLFDLDNKD) is interaction with histone H3. Cys-1168 provides a ligand contact to Zn(2+). The interaction with histone H3 stretch occupies residues 1207–1210 (YGDR). The 17-residue stretch at 1217–1233 (KYFTCQCGSEKCKHSAE) folds into the Post-SET domain. Zn(2+)-binding residues include Cys-1221, Cys-1223, and Cys-1228. Ser-1257 is modified (phosphoserine). Thr-1263 carries the phosphothreonine modification.

The protein belongs to the class V-like SAM-binding methyltransferase superfamily. Histone-lysine methyltransferase family. Suvar3-9 subfamily. As to quaternary structure, heterodimer; heterodimerizes with EHMT1/GLP. Interacts with GFI1B and WIZ. Part of the E2F6.com-1 complex in G0 phase composed of E2F6, MGA, MAX, TFDP1, CBX3, BAT8, EHMT1, RING1, RNF2, MBLR, L3MBTL2 and YAF2. Part of a complex composed of TRIM28, HDAC1, HDAC2 and EHMT2. Interacts with UHRF1. Interacts with CDYL. Interacts with REST only in the presence of CDYL. Part of a complex containing at least CDYL, REST, WIZ, SETB1, EHMT1 and EHMT2. Interacts with PRDM9 and CDYL; interaction only takes place when PRDM9 is bound to hotspot DNA. Interacts with SMYD5. In terms of processing, methylated at Lys-239; automethylated. As to expression, ubiquitous.

The protein localises to the nucleus. The protein resides in the chromosome. It carries out the reaction N(6)-methyl-L-lysyl(9)-[histone H3] + S-adenosyl-L-methionine = N(6),N(6)-dimethyl-L-lysyl(9)-[histone H3] + S-adenosyl-L-homocysteine + H(+). The catalysed reaction is L-lysyl(9)-[histone H3] + S-adenosyl-L-methionine = N(6)-methyl-L-lysyl(9)-[histone H3] + S-adenosyl-L-homocysteine + H(+). Histone methyltransferase that specifically mono- and dimethylates 'Lys-9' of histone H3 (H3K9me1 and H3K9me2, respectively) in euchromatin. H3K9me represents a specific tag for epigenetic transcriptional repression by recruiting HP1 proteins to methylated histones. Also mediates monomethylation of 'Lys-56' of histone H3 (H3K56me1) in G1 phase, leading to promote interaction between histone H3 and PCNA and regulating DNA replication. Also weakly methylates 'Lys-27' of histone H3 (H3K27me). Also required for DNA methylation, the histone methyltransferase activity is not required for DNA methylation, suggesting that these 2 activities function independently. Probably targeted to histone H3 by different DNA-binding proteins like E2F6, MGA, MAX and/or DP1. May also methylate histone H1. In addition to the histone methyltransferase activity, also methylates non-histone proteins: mediates dimethylation of 'Lys-373' of p53/TP53. Also methylates CDYL, WIZ, ACIN1, DNMT1, HDAC1, ERCC6, KLF12 and itself. The polypeptide is Histone-lysine N-methyltransferase EHMT2 (Ehmt2) (Mus musculus (Mouse)).